Here is a 123-residue protein sequence, read N- to C-terminus: Histone H2B.3 (123 aa).

Residues 1–30 are disordered; the sequence is MPPKVSGKAAKKAGKAQKNISKGDKKKNRK. A glycan (O-linked (GlcNAc) serine) is linked at Ser110. Lys118 is covalently cross-linked (Glycyl lysine isopeptide (Lys-Gly) (interchain with G-Cter in ubiquitin)).

Belongs to the histone H2B family. The nucleosome is a histone octamer containing two molecules each of H2A, H2B, H3 and H4 assembled in one H3-H4 heterotetramer and two H2A-H2B heterodimers. The octamer wraps approximately 147 bp of DNA. In terms of processing, monoubiquitination of Lys-118 gives a specific tag for epigenetic transcriptional activation and is also prerequisite for histone H3 'Lys-4' and 'Lys-79' methylation. Post-translationally, glcNAcylation at Ser-110 promotes monoubiquitination of Lys-118. It fluctuates in response to extracellular glucose, and associates with transcribed genes.

It is found in the nucleus. The protein localises to the chromosome. Functionally, core component of nucleosome. Nucleosomes wrap and compact DNA into chromatin, limiting DNA accessibility to the cellular machineries which require DNA as a template. Histones thereby play a central role in transcription regulation, DNA repair, DNA replication and chromosomal stability. DNA accessibility is regulated via a complex set of post-translational modifications of histones, also called histone code, and nucleosome remodeling. This Tigriopus californicus (Marine copepod) protein is Histone H2B.3.